The sequence spans 207 residues: Inhibitor of hydrogen peroxide resistance (207 aa).

The H-T-H motif DNA-binding region spans 163 to 182 (MNYIHQRTRISRSVVAEVLA).

The protein belongs to the IprA family.

Functionally, involved in oxidative stress resistance. The polypeptide is Inhibitor of hydrogen peroxide resistance (Escherichia coli O157:H7).